A 300-amino-acid chain; its full sequence is tRNA dimethylallyltransferase (300 aa).

Residue 18–25 (GPTATGKS) coordinates ATP. Residue 20–25 (TATGKS) participates in substrate binding. An interaction with substrate tRNA region spans residues 43 to 46 (DSRQ).

The protein belongs to the IPP transferase family. As to quaternary structure, monomer. The cofactor is Mg(2+).

It carries out the reaction adenosine(37) in tRNA + dimethylallyl diphosphate = N(6)-dimethylallyladenosine(37) in tRNA + diphosphate. Functionally, catalyzes the transfer of a dimethylallyl group onto the adenine at position 37 in tRNAs that read codons beginning with uridine, leading to the formation of N6-(dimethylallyl)adenosine (i(6)A). This Cyanothece sp. (strain PCC 7425 / ATCC 29141) protein is tRNA dimethylallyltransferase.